The sequence spans 306 residues: Ribonucleoside-diphosphate reductase small subunit (306 aa).

Positions 66, 96, and 99 each coordinate Fe cation. Tyrosine 103 is an active-site residue. The helical transmembrane segment at 153–173 (ILMILIEGIFFVSSFAAIAYL) threads the bilayer. The Fe cation site is built by glutamate 159, glutamate 193, and histidine 196.

It belongs to the ribonucleoside diphosphate reductase small chain family. In terms of assembly, heterotetramer composed of a homodimer of the large subunit (R1) and a homodimer of the small subunit (R2). Larger multisubunit protein complex are also active, composed of (R1)n(R2)n. The cofactor is Fe cation.

It localises to the host membrane. The enzyme catalyses a 2'-deoxyribonucleoside 5'-diphosphate + [thioredoxin]-disulfide + H2O = a ribonucleoside 5'-diphosphate + [thioredoxin]-dithiol. In terms of biological role, ribonucleoside-diphosphate reductase holoenzyme provides the precursors necessary for viral DNA synthesis. Allows virus growth in non-dividing cells, as well as reactivation from latency in infected hosts. Catalyzes the biosynthesis of deoxyribonucleotides from the corresponding ribonucleotides. The protein is Ribonucleoside-diphosphate reductase small subunit of Varicella-zoster virus (strain Dumas) (HHV-3).